The primary structure comprises 419 residues: MDVDNGEGQVQVHLKTKQEHYAVPDVPYAIDGTVTTAELNTFVNALLLSKGSSAVDFDFLVFDEYLRGRLCDHLREKAISFEDAIEIEYVERFPAPEPQDCLLHDDWVSAVKASGKWILTGCYDNTLNIWTNKGKHILTIPGHTAPIKAVDWISLDDDTGRFVSSSQDQTAMLWQWNVGANTVECVSVCKGHERGVDSVSVSPDGQRFATGSWDTMLKVWSAELEDAGEGTSKRMKESGVRTPKITLQGHRESISAVQWMDASTLLTGSWDHTLKVWDLSLEGIKAEISTNKSIFDASYSKLNHLILTASADKNLRLYDSRTNQGSVVRNTYLGHNAWVQTVMWSTTEEFLFVSGSYDNQNKLWDCRSPKAPLYDLLGHGEKVLDIDWSNPKYIVSGGSDNTVRVFKSRKALVENMDTK.

Residues 10–91 are ubiquitin-like (UBL) domain; it reads VQVHLKTKQE…EDAIEIEYVE (82 aa). WD repeat units follow at residues 103–141, 142–184, 191–230, 249–287, 289–328, 334–374, and 378–416; these read LHDD…LTIP, GHTA…NTVE, GHER…AGEG, GHRE…IKAE, STNK…GSVV, GHNA…APLY, and GHGE…VENM.

This sequence belongs to the WD repeat WDR12/YTM1 family.

It localises to the nucleus. Its subcellular location is the nucleolus. The protein resides in the nucleoplasm. Functionally, required for maturation of ribosomal RNAs and formation of the large ribosomal subunit. This is Ribosome biogenesis protein WDR12 homolog from Drosophila pseudoobscura pseudoobscura (Fruit fly).